Consider the following 638-residue polypeptide: DNA mismatch repair protein MutL (638 aa).

The interval 404–433 is disordered; that stretch reads FGTQTNAFGSMATPRDNSRGNYSAGESRQR.

It belongs to the DNA mismatch repair MutL/HexB family.

In terms of biological role, this protein is involved in the repair of mismatches in DNA. It is required for dam-dependent methyl-directed DNA mismatch repair. May act as a 'molecular matchmaker', a protein that promotes the formation of a stable complex between two or more DNA-binding proteins in an ATP-dependent manner without itself being part of a final effector complex. The chain is DNA mismatch repair protein MutL from Shewanella baltica (strain OS195).